The primary structure comprises 86 residues: YcgL domain-containing protein Smlt4554 (86 aa).

The YcgL domain maps to 1 to 85 (MHAYVYKSQL…SVASLMPRHY (85 aa)).

This is YcgL domain-containing protein Smlt4554 from Stenotrophomonas maltophilia (strain K279a).